The chain runs to 351 residues: Hydroxymethylglutaryl-CoA synthase (351 aa).

Residue glutamate 80 is the Proton donor/acceptor of the active site. Cysteine 112 functions as the Acyl-thioester intermediate in the catalytic mechanism. (3S)-3-hydroxy-3-methylglutaryl-CoA-binding residues include cysteine 112 and serine 153. Arginine 199 is a CoA binding site. (3S)-3-hydroxy-3-methylglutaryl-CoA-binding residues include threonine 201 and histidine 234. Histidine 234 acts as the Proton donor/acceptor in catalysis. Lysine 239 lines the CoA pocket. Residues arginine 243, asparagine 266, and serine 296 each coordinate (3S)-3-hydroxy-3-methylglutaryl-CoA.

It belongs to the thiolase-like superfamily. Archaeal HMG-CoA synthase family. Interacts with acetoacetyl-CoA thiolase that catalyzes the precedent step in the pathway and with a DUF35 protein. The acetoacetyl-CoA thiolase/HMG-CoA synthase complex channels the intermediate via a fused CoA-binding site, which allows for efficient coupling of the endergonic thiolase reaction with the exergonic HMGCS reaction.

The catalysed reaction is acetoacetyl-CoA + acetyl-CoA + H2O = (3S)-3-hydroxy-3-methylglutaryl-CoA + CoA + H(+). It participates in metabolic intermediate biosynthesis; (R)-mevalonate biosynthesis; (R)-mevalonate from acetyl-CoA: step 2/3. In terms of biological role, catalyzes the condensation of acetyl-CoA with acetoacetyl-CoA to form 3-hydroxy-3-methylglutaryl-CoA (HMG-CoA). Functions in the mevalonate (MVA) pathway leading to isopentenyl diphosphate (IPP), a key precursor for the biosynthesis of isoprenoid compounds that are building blocks of archaeal membrane lipids. The sequence is that of Hydroxymethylglutaryl-CoA synthase from Thermoplasma volcanium (strain ATCC 51530 / DSM 4299 / JCM 9571 / NBRC 15438 / GSS1).